We begin with the raw amino-acid sequence, 154 residues long: MSNKKEIVVTDWIKQNCHEGNFLNLTLSSDQRRVFRGKRKSDCNQELQLQLPREGKLNDGDILLTNQKKLFVQIIAQKENLIKITAKTSIELIKVAYHLGNRHVEIEINENILFTKSDYIIEELLRNFDVVYSKVEKKFFPEIGAFHHEKKSLS.

It belongs to the UreE family.

The protein resides in the cytoplasm. Involved in urease metallocenter assembly. Binds nickel. Probably functions as a nickel donor during metallocenter assembly. This chain is Urease accessory protein UreE, found in Prochlorococcus marinus subsp. pastoris (strain CCMP1986 / NIES-2087 / MED4).